Reading from the N-terminus, the 185-residue chain is Ribosome-recycling factor (185 aa).

The protein belongs to the RRF family.

It is found in the cytoplasm. Its function is as follows. Responsible for the release of ribosomes from messenger RNA at the termination of protein biosynthesis. May increase the efficiency of translation by recycling ribosomes from one round of translation to another. In Serratia proteamaculans (strain 568), this protein is Ribosome-recycling factor.